We begin with the raw amino-acid sequence, 197 residues long: MLSHLRPALVSMGLFTVLLGLAYPLAVTGVAQAAFPNQANGSLIRDADGKVVGSALIGQVFAKPEYFHGRPSAAGAGYDASASSGSNMGPLNETLIARLKTDAAALRAENPGVAIPADAVTTSGSGLDPDISPANARFQAPRVAGARGVPEKDVTALIDAQVQQPLLGFIGQPRVNVLALNRALDARYPPLASQKDG.

A helical transmembrane segment spans residues 7–27 (PALVSMGLFTVLLGLAYPLAV).

Belongs to the KdpC family. In terms of assembly, the system is composed of three essential subunits: KdpA, KdpB and KdpC.

It is found in the cell inner membrane. Functionally, part of the high-affinity ATP-driven potassium transport (or Kdp) system, which catalyzes the hydrolysis of ATP coupled with the electrogenic transport of potassium into the cytoplasm. This subunit acts as a catalytic chaperone that increases the ATP-binding affinity of the ATP-hydrolyzing subunit KdpB by the formation of a transient KdpB/KdpC/ATP ternary complex. The polypeptide is Potassium-transporting ATPase KdpC subunit (Caulobacter vibrioides (strain ATCC 19089 / CIP 103742 / CB 15) (Caulobacter crescentus)).